Here is a 247-residue protein sequence, read N- to C-terminus: MMDRIVMEVSRYRPEIESAPTFQAYEVPLTREWAVLDGLTYIKDHLDGTLSFRWSCRMGICGSSGMTINGDPKLACATFLADYLPGPVRVEPMRNFPVIRDLVVDISDFMAKLPSVKPWLVRHDEPPVEDGEYRQTPAELDAFKQFSMCINCMLCYSACPVYALDPDFLGPAAIALGQRYNLDSRDQGAADRRDVLAAADGAWACTLVGECSTACPKGVDPAGAIQRYKLTAATHALKKLLFPWGGG.

Y12 contacts a menaquinone. Residues 14–94 (PEIESAPTFQ…PGPVRVEPMR (81 aa)) form the 2Fe-2S ferredoxin-type domain. [2Fe-2S] cluster contacts are provided by C56, C61, and C76. The region spanning 140-169 (LDAFKQFSMCINCMLCYSACPVYALDPDFL) is the 4Fe-4S ferredoxin-type domain. Residues C149, C152, and C155 each coordinate [4Fe-4S] cluster. C159, C205, and C211 together coordinate [3Fe-4S] cluster. Position 215 (C215) interacts with [4Fe-4S] cluster. 226–229 (QRYK) contacts a menaquinone.

This sequence belongs to the succinate dehydrogenase/fumarate reductase iron-sulfur protein family. As to quaternary structure, fumarate dehydrogenase forms part of an enzyme complex containing four subunits: a flavoprotein, an iron-sulfur, and two hydrophobic anchor proteins. [2Fe-2S] cluster serves as cofactor. The cofactor is [3Fe-4S] cluster. Requires [4Fe-4S] cluster as cofactor.

Its subcellular location is the cell membrane. It catalyses the reaction a quinone + succinate = fumarate + a quinol. The enzyme catalyses a menaquinone + succinate = a menaquinol + fumarate. The polypeptide is Fumarate reductase iron-sulfur subunit (frdB) (Mycobacterium tuberculosis (strain CDC 1551 / Oshkosh)).